The chain runs to 71 residues: Large ribosomal subunit protein uL30 (71 aa).

It belongs to the universal ribosomal protein uL30 family. As to quaternary structure, part of the 50S ribosomal subunit.

The chain is Large ribosomal subunit protein uL30 from Borreliella burgdorferi (strain ATCC 35210 / DSM 4680 / CIP 102532 / B31) (Borrelia burgdorferi).